Here is a 294-residue protein sequence, read N- to C-terminus: Nucleotide-binding protein NT01CX_1284 (294 aa).

8–15 is an ATP binding site; it reads GLSGAGKS. 59–62 provides a ligand contact to GTP; sequence DIRG.

This sequence belongs to the RapZ-like family.

Functionally, displays ATPase and GTPase activities. This Clostridium novyi (strain NT) protein is Nucleotide-binding protein NT01CX_1284.